The primary structure comprises 100 residues: Small ribosomal subunit protein uS14c (100 aa).

The protein belongs to the universal ribosomal protein uS14 family. In terms of assembly, part of the 30S ribosomal subunit.

It is found in the plastid. It localises to the chloroplast. In terms of biological role, binds 16S rRNA, required for the assembly of 30S particles. In Trieres chinensis (Marine centric diatom), this protein is Small ribosomal subunit protein uS14c.